The primary structure comprises 303 residues: Dehydrodolichyl diphosphate synthase 1 (303 aa).

Residues 14–34 traverse the membrane as a helical segment; the sequence is LLFLFLIPCLFITSYIGFPVF.

Belongs to the UPP synthase family. It depends on Mg(2+) as a cofactor. Expressed in low levels in the whole plant. Preferentially expressed in roots.

The protein localises to the endoplasmic reticulum membrane. The catalysed reaction is n isopentenyl diphosphate + (2E,6E)-farnesyl diphosphate = a di-trans,poly-cis-polyprenyl diphosphate + n diphosphate. It participates in protein modification; protein glycosylation. In terms of biological role, catalyzes cis-prenyl chain elongation to produce the polyprenyl backbone of dolichol, a glycosyl carrier-lipid required for the biosynthesis of several classes of glycoprotein. This chain is Dehydrodolichyl diphosphate synthase 1 (DPS), found in Arabidopsis thaliana (Mouse-ear cress).